Consider the following 188-residue polypeptide: Vascular endothelial growth factor A-A (188 aa).

A signal peptide spans 1–23; sequence MNLVVYLIQLFLAALLHLSAVKA. Intrachain disulfides connect cysteine 49–cysteine 91, cysteine 80–cysteine 125, and cysteine 84–cysteine 127. An N-linked (GlcNAc...) asparagine glycan is attached at asparagine 98.

It belongs to the PDGF/VEGF growth factor family. As to quaternary structure, homodimer; disulfide-linked. Isoform VEGF165 binds kdr and kdrl. In terms of tissue distribution, predominantly expressed in regions associated with active vascularization. From 15-16 hours post-fertilization (hpf), expressed in the anterior forebrain, the mesoderm underlying and lateral to the anterior hindbrain, the mesoderm underlying and lateral to the posterior hindbrain, and in the ventral medial portions of the somites. By 30-36 hpf, expression in the somites is decreased, while strong expression is observed in the region of the developing glomeruli and in the anterior portion of the pronephric ducts, the pharyngeal arches, and the brain. By 72 hpf, expression remains only in the pronephros region.

The protein resides in the secreted. Its function is as follows. Growth factor active in angiogenesis, vasculogenesis and endothelial cell growth. Induces endothelial cell proliferation, promotes cell migration, inhibits apoptosis, and induces permeabilization of blood vessels. Required for intersegmental vessel development in the tail during embryogenesis. Acts both upstream of kdr and tie1 to stimulate endothelial cell differentiation, and upstream of gata1 to stimulate hematopoietic cell differentiation. This Danio rerio (Zebrafish) protein is Vascular endothelial growth factor A-A (vegfaa).